Here is a 209-residue protein sequence, read N- to C-terminus: Uracil phosphoribosyltransferase (209 aa).

Residues R79, R104, and 131–139 (DPMLATGGS) contribute to the 5-phospho-alpha-D-ribose 1-diphosphate site. Uracil-binding positions include I194 and 199-201 (GDA). Position 200 (D200) interacts with 5-phospho-alpha-D-ribose 1-diphosphate.

This sequence belongs to the UPRTase family. Mg(2+) serves as cofactor.

It catalyses the reaction UMP + diphosphate = 5-phospho-alpha-D-ribose 1-diphosphate + uracil. It participates in pyrimidine metabolism; UMP biosynthesis via salvage pathway; UMP from uracil: step 1/1. Its activity is regulated as follows. Allosterically activated by GTP. Functionally, catalyzes the conversion of uracil and 5-phospho-alpha-D-ribose 1-diphosphate (PRPP) to UMP and diphosphate. This chain is Uracil phosphoribosyltransferase, found in Pediococcus pentosaceus (strain ATCC 25745 / CCUG 21536 / LMG 10740 / 183-1w).